The sequence spans 462 residues: UDP-N-acetylmuramoylalanine--D-glutamate ligase (462 aa).

Position 117 to 123 (117 to 123) interacts with ATP; the sequence is GTNGKTT.

This sequence belongs to the MurCDEF family.

The protein localises to the cytoplasm. It carries out the reaction UDP-N-acetyl-alpha-D-muramoyl-L-alanine + D-glutamate + ATP = UDP-N-acetyl-alpha-D-muramoyl-L-alanyl-D-glutamate + ADP + phosphate + H(+). It participates in cell wall biogenesis; peptidoglycan biosynthesis. In terms of biological role, cell wall formation. Catalyzes the addition of glutamate to the nucleotide precursor UDP-N-acetylmuramoyl-L-alanine (UMA). The protein is UDP-N-acetylmuramoylalanine--D-glutamate ligase of Parasynechococcus marenigrum (strain WH8102).